The sequence spans 352 residues: Putative pectinesterase 11 (352 aa).

Residues 13–35 form a helical membrane-spanning segment; the sequence is ANYHHIIIINIFILSSITSSSMA. Asn-76 carries N-linked (GlcNAc...) asparagine glycosylation. Residue Asp-175 is the Proton donor of the active site. Catalysis depends on Asp-196, which acts as the Nucleophile. A glycan (N-linked (GlcNAc...) asparagine) is linked at Asn-218. 2 residues coordinate substrate: Arg-252 and Trp-254. Positions 332–352 are disordered; sequence LRPAPSHFKNAPKQTQNKEIN. Polar residues predominate over residues 343–352; the sequence is PKQTQNKEIN.

The protein belongs to the pectinesterase family.

The protein resides in the membrane. The enzyme catalyses [(1-&gt;4)-alpha-D-galacturonosyl methyl ester](n) + n H2O = [(1-&gt;4)-alpha-D-galacturonosyl](n) + n methanol + n H(+). It participates in glycan metabolism; pectin degradation; 2-dehydro-3-deoxy-D-gluconate from pectin: step 1/5. Functionally, acts in the modification of cell walls via demethylesterification of cell wall pectin. This is Putative pectinesterase 11 (PME11) from Arabidopsis thaliana (Mouse-ear cress).